The following is a 3380-amino-acid chain: Apolipophorins (3380 aa).

The first 21 residues, Met-1–Ser-21, serve as a signal peptide directing secretion. Residues Tyr-40 to Val-646 enclose the Vitellogenin domain. Residues Asn-132, Asn-649, Asn-969, Asn-2174, Asn-2851, and Asn-3177 are each glycosylated (N-linked (GlcNAc...) asparagine). In terms of domain architecture, VWFD spans Ala-2815–Ala-2979. Cysteines 2839 and 2978 form a disulfide.

Post-translationally, cleaved into 2 chains by furin protease. However, prevention of cleavage does not impair its function. N-glycosylated. As to expression, present in brain, hemolymph, fat body and eyes.

The protein localises to the secreted. Constitutes the major component of lipophorin, which mediates transport for various types of lipids in hemolymph. Acts by forming lipoprotein particles that bind lipoproteins and lipids. May be required for morphogens wingless (wg) and hedgehog (hh) function, possibly by acting as vehicles for the movement of wg and hh. The polypeptide is Apolipophorins (Locusta migratoria (Migratory locust)).